The following is a 148-amino-acid chain: Universal stress protein YxiE (148 aa).

The N-terminal stretch at 1–18 is a signal peptide; sequence MFNKMLVAIDGSDMSAKA.

It belongs to the universal stress protein A family.

This chain is Universal stress protein YxiE (yxiE), found in Bacillus subtilis (strain 168).